Here is a 334-residue protein sequence, read N- to C-terminus: F-box protein AUF1 (334 aa).

Residues M1–L49 form the F-box domain.

In terms of assembly, part of a SCF (ASK-cullin-F-box) protein ligase complex. Interacts with SKP1A/ASK1, SKP1B/ASK2, ASK11 and ASK13.

The protein localises to the nucleus. The protein operates within protein modification; protein ubiquitination. Functionally, component of SCF(ASK-cullin-F-box) E3 ubiquitin ligase complexes, which may mediate the ubiquitination and subsequent proteasomal degradation of target proteins. Involved in the control of basipetal and acropetal auxin transport by promoting the distribution and expression of the auxin transporter PIN2. Promotes cytokinin-mediated cell expansion in the root elongation and differentiation zone, without affecting root cell division. The protein is F-box protein AUF1 of Arabidopsis thaliana (Mouse-ear cress).